A 159-amino-acid polypeptide reads, in one-letter code: NADH-quinone oxidoreductase subunit B (159 aa).

Cysteine 37, cysteine 38, cysteine 102, and cysteine 132 together coordinate [4Fe-4S] cluster.

This sequence belongs to the complex I 20 kDa subunit family. In terms of assembly, NDH-1 is composed of 14 different subunits. Subunits NuoB, C, D, E, F, and G constitute the peripheral sector of the complex. The cofactor is [4Fe-4S] cluster.

The protein localises to the cell inner membrane. The catalysed reaction is a quinone + NADH + 5 H(+)(in) = a quinol + NAD(+) + 4 H(+)(out). Its function is as follows. NDH-1 shuttles electrons from NADH, via FMN and iron-sulfur (Fe-S) centers, to quinones in the respiratory chain. Couples the redox reaction to proton translocation (for every two electrons transferred, four hydrogen ions are translocated across the cytoplasmic membrane), and thus conserves the redox energy in a proton gradient. This is NADH-quinone oxidoreductase subunit B from Polaromonas naphthalenivorans (strain CJ2).